The primary structure comprises 305 residues: Porphobilinogen deaminase (305 aa).

Cysteine 243 carries the post-translational modification S-(dipyrrolylmethanemethyl)cysteine.

Belongs to the HMBS family. In terms of assembly, monomer. Dipyrromethane serves as cofactor.

The catalysed reaction is 4 porphobilinogen + H2O = hydroxymethylbilane + 4 NH4(+). It participates in porphyrin-containing compound metabolism; protoporphyrin-IX biosynthesis; coproporphyrinogen-III from 5-aminolevulinate: step 2/4. In terms of biological role, tetrapolymerization of the monopyrrole PBG into the hydroxymethylbilane pre-uroporphyrinogen in several discrete steps. In Limosilactobacillus reuteri (strain DSM 20016) (Lactobacillus reuteri), this protein is Porphobilinogen deaminase.